A 72-amino-acid polypeptide reads, in one-letter code: Translational regulator CsrA (72 aa).

Belongs to the CsrA/RsmA family. As to quaternary structure, homodimer; the beta-strands of each monomer intercalate to form a hydrophobic core, while the alpha-helices form wings that extend away from the core.

It localises to the cytoplasm. Its function is as follows. A translational regulator that binds mRNA to regulate translation initiation and/or mRNA stability. Usually binds in the 5'-UTR at or near the Shine-Dalgarno sequence preventing ribosome-binding, thus repressing translation. Its main target seems to be the major flagellin gene, while its function is anatagonized by FliW. This chain is Translational regulator CsrA, found in Ruminiclostridium cellulolyticum (strain ATCC 35319 / DSM 5812 / JCM 6584 / H10) (Clostridium cellulolyticum).